The primary structure comprises 368 residues: Alanine racemase (368 aa).

Lys-40 functions as the Proton acceptor; specific for D-alanine in the catalytic mechanism. Lys-40 carries the N6-(pyridoxal phosphate)lysine modification. Arg-134 provides a ligand contact to substrate. Residue Tyr-263 is the Proton acceptor; specific for L-alanine of the active site. Met-310 lines the substrate pocket.

The protein belongs to the alanine racemase family. Pyridoxal 5'-phosphate is required as a cofactor.

It carries out the reaction L-alanine = D-alanine. Its pathway is amino-acid biosynthesis; D-alanine biosynthesis; D-alanine from L-alanine: step 1/1. Functionally, catalyzes the interconversion of L-alanine and D-alanine. May also act on other amino acids. The sequence is that of Alanine racemase (alr) from Listeria monocytogenes serotype 1/2a (strain 10403S).